We begin with the raw amino-acid sequence, 178 residues long: Interleukin-10 (178 aa).

The N-terminal stretch at 1–18 is a signal peptide; it reads MHSSALLCCLVFLTGVRA. 2 disulfide bridges follow: cysteine 30–cysteine 126 and cysteine 80–cysteine 132. Asparagine 134 is a glycosylation site (N-linked (GlcNAc...) asparagine).

It belongs to the IL-10 family. In terms of assembly, homodimer. Interacts with IL10RA and IL10RB.

The protein resides in the secreted. In terms of biological role, major immune regulatory cytokine that acts on many cells of the immune system where it has profound anti-inflammatory functions, limiting excessive tissue disruption caused by inflammation. Mechanistically, IL10 binds to its heterotetrameric receptor comprising IL10RA and IL10RB leading to JAK1 and STAT2-mediated phosphorylation of STAT3. In turn, STAT3 translocates to the nucleus where it drives expression of anti-inflammatory mediators. Targets antigen-presenting cells (APCs) such as macrophages and monocytes and inhibits their release of pro-inflammatory cytokines including granulocyte-macrophage colony-stimulating factor /GM-CSF, granulocyte colony-stimulating factor/G-CSF, IL-1 alpha, IL-1 beta, IL-6, IL-8 and TNF-alpha. Also interferes with antigen presentation by reducing the expression of MHC-class II and co-stimulatory molecules, thereby inhibiting their ability to induce T cell activation. In addition, controls the inflammatory response of macrophages by reprogramming essential metabolic pathways including mTOR signaling. The protein is Interleukin-10 (IL10) of Saimiri sciureus (Common squirrel monkey).